The primary structure comprises 38 residues: Large ribosomal subunit protein bL36 (38 aa).

It belongs to the bacterial ribosomal protein bL36 family.

This is Large ribosomal subunit protein bL36 from Pseudomonas entomophila (strain L48).